The primary structure comprises 412 residues: Na(+)-translocating NADH-quinone reductase subunit B (412 aa).

The next 3 helical transmembrane spans lie at 57–77 (MILV…NVGL), 127–147 (VFFL…EVLF), and 163–183 (SILF…ALGI). FMN phosphoryl threonine is present on Thr-236. 5 helical membrane passes run 270–290 (GSIG…ILFG), 297–317 (IVAG…VIGS), 322–342 (MFSM…GMMF), 358–378 (WSYG…NPAY), and 381–401 (GMML…YLVV).

Belongs to the NqrB/RnfD family. In terms of assembly, composed of six subunits; NqrA, NqrB, NqrC, NqrD, NqrE and NqrF. It depends on FMN as a cofactor.

The protein localises to the cell inner membrane. It catalyses the reaction a ubiquinone + n Na(+)(in) + NADH + H(+) = a ubiquinol + n Na(+)(out) + NAD(+). In terms of biological role, NQR complex catalyzes the reduction of ubiquinone-1 to ubiquinol by two successive reactions, coupled with the transport of Na(+) ions from the cytoplasm to the periplasm. NqrA to NqrE are probably involved in the second step, the conversion of ubisemiquinone to ubiquinol. The protein is Na(+)-translocating NADH-quinone reductase subunit B of Klebsiella pneumoniae (strain 342).